The chain runs to 251 residues: MSLATLETRLGHHFGDQALLEQALTHRSHGARHNERLEFLGDSVLNFVVAAMLFERYAKLDEGDLSRVRANLVKQASLADIAQRLELSPYLRLGEGEMKSGGFRRPSILADAVEALFGAVFLDAGFDAARKVIEQQYVPVLANVDPETLGKDAKTLLQEFLQGRKLALPLYTVVATHGAAHSQQFEVECAIPALEIKVTAAGASRRAAEQSAAKLALEAALVVSPRATRKGGRARKTAQLSLPVAVAQEVK.

Residues 3-125 (LATLETRLGH…LFGAVFLDAG (123 aa)) form the RNase III domain. Glu-38 serves as a coordination point for Mg(2+). Asp-42 is a catalytic residue. Residues Asp-111 and Glu-114 each coordinate Mg(2+). The active site involves Glu-114. Residues 152 to 222 (DAKTLLQEFL…AKLALEAALV (71 aa)) form the DRBM domain.

It belongs to the ribonuclease III family. Homodimer. The cofactor is Mg(2+).

Its subcellular location is the cytoplasm. The enzyme catalyses Endonucleolytic cleavage to 5'-phosphomonoester.. Its function is as follows. Digests double-stranded RNA. Involved in the processing of primary rRNA transcript to yield the immediate precursors to the large and small rRNAs (23S and 16S). Processes some mRNAs, and tRNAs when they are encoded in the rRNA operon. Processes pre-crRNA and tracrRNA of type II CRISPR loci if present in the organism. In Bordetella avium (strain 197N), this protein is Ribonuclease 3.